Reading from the N-terminus, the 123-residue chain is Large ribosomal subunit protein bL20 (123 aa).

It belongs to the bacterial ribosomal protein bL20 family.

Functionally, binds directly to 23S ribosomal RNA and is necessary for the in vitro assembly process of the 50S ribosomal subunit. It is not involved in the protein synthesizing functions of that subunit. This Pseudothermotoga lettingae (strain ATCC BAA-301 / DSM 14385 / NBRC 107922 / TMO) (Thermotoga lettingae) protein is Large ribosomal subunit protein bL20.